A 1157-amino-acid polypeptide reads, in one-letter code: Voltage-dependent calcium channel subunit alpha-2/delta-2 (1157 aa).

The N-terminal stretch at 1–18 is a signal peptide; it reads MAVPARTCGASWPGPVRT. The segment at 1-37 is disordered; that stretch reads MAVPARTCGASWPGPVRTARPWPGRGPRPCPDPRGPA. Residues 19 to 1119 are Extracellular-facing; it reads ARPWPGRGPR…TEDTSDCGRG (1101 aa). Positions 24-34 are enriched in pro residues; it reads GRGPRPCPDPR. Asn-205 is a glycosylation site (N-linked (GlcNAc...) asparagine). The VWFA domain maps to 294–472; that stretch reads DMVIIVDVSG…INTQEYLDVL (179 aa). Residues Asp-300, Ser-302, and Ser-304 each coordinate a divalent metal cation. Residues 300-304 carry the MIDAS-like motif motif; it reads DVSGS. N-linked (GlcNAc...) asparagine glycosylation is found at Asn-389, Asn-421, Asn-510, Asn-543, Asn-627, and Asn-864. Cys-446 and Cys-1104 are joined by a disulfide. The Cache domain occupies 488-577; it reads WTNVYEDALG…KPQITNFREP (90 aa). The helical transmembrane segment at 1120–1140 threads the bilayer; the sequence is ASFPPSLGVLVSLQLLLLLGL. The Cytoplasmic segment spans residues 1141–1157; sequence PPRPQPQIHSFTPSRRL.

The protein belongs to the calcium channel subunit alpha-2/delta family. In terms of assembly, dimer formed of alpha-2-2 and delta-2 chains; disulfide-linked. Voltage-dependent calcium channels are multisubunit complexes, consisting of alpha-1 (CACNA1), alpha-2 (CACNA2D), beta (CACNB) and delta (CACNA2D) subunits in a 1:1:1:1 ratio. N-glycosylated. In terms of processing, may be proteolytically processed into subunits alpha-2-2 and delta-2 that are disulfide-linked. It is however unclear whether such cleavage really takes place in vivo and has a functional role. In terms of tissue distribution, in heart, it is highly expressed in atrium and at lower level in ventricle.

It is found in the membrane. The alpha-2/delta subunit of voltage-dependent calcium channels regulates calcium current density and activation/inactivation kinetics of the calcium channel. Acts as a regulatory subunit for P/Q-type calcium channel (CACNA1A), N-type (CACNA1B), L-type (CACNA1C OR CACNA1D) and possibly T-type (CACNA1G). Overexpression induces apoptosis. This Rattus norvegicus (Rat) protein is Voltage-dependent calcium channel subunit alpha-2/delta-2 (Cacna2d2).